Reading from the N-terminus, the 203-residue chain is Urease accessory protein UreG (203 aa).

14 to 21 (GPVGSGKT) lines the GTP pocket.

It belongs to the SIMIBI class G3E GTPase family. UreG subfamily. In terms of assembly, homodimer. UreD, UreF and UreG form a complex that acts as a GTP-hydrolysis-dependent molecular chaperone, activating the urease apoprotein by helping to assemble the nickel containing metallocenter of UreC. The UreE protein probably delivers the nickel.

It is found in the cytoplasm. Its function is as follows. Facilitates the functional incorporation of the urease nickel metallocenter. This process requires GTP hydrolysis, probably effectuated by UreG. The sequence is that of Urease accessory protein UreG from Allorhizobium ampelinum (strain ATCC BAA-846 / DSM 112012 / S4) (Agrobacterium vitis (strain S4)).